Consider the following 106-residue polypeptide: NADH-quinone oxidoreductase subunit K (106 aa).

Transmembrane regions (helical) follow at residues 10 to 30, 35 to 55, and 67 to 87; these read IHYY…GVMV, VLIF…FVTF, and VVFF…AIVI.

It belongs to the complex I subunit 4L family. In terms of assembly, NDH-1 is composed of 14 different subunits. Subunits NuoA, H, J, K, L, M, N constitute the membrane sector of the complex.

The protein resides in the cell inner membrane. It carries out the reaction a quinone + NADH + 5 H(+)(in) = a quinol + NAD(+) + 4 H(+)(out). NDH-1 shuttles electrons from NADH, via FMN and iron-sulfur (Fe-S) centers, to quinones in the respiratory chain. The immediate electron acceptor for the enzyme in this species is believed to be ubiquinone. Couples the redox reaction to proton translocation (for every two electrons transferred, four hydrogen ions are translocated across the cytoplasmic membrane), and thus conserves the redox energy in a proton gradient. This chain is NADH-quinone oxidoreductase subunit K, found in Leptospira interrogans serogroup Icterohaemorrhagiae serovar copenhageni (strain Fiocruz L1-130).